An 85-amino-acid polypeptide reads, in one-letter code: RNA-binding protein Hfq (85 aa).

The 61-residue stretch at 10 to 70 (DIFLNGARKN…ISTINPAKPL (61 aa)) folds into the Sm domain.

The protein belongs to the Hfq family. In terms of assembly, homohexamer.

RNA chaperone that binds small regulatory RNA (sRNAs) and mRNAs to facilitate mRNA translational regulation in response to envelope stress, environmental stress and changes in metabolite concentrations. Also binds with high specificity to tRNAs. This is RNA-binding protein Hfq from Clostridium botulinum (strain 657 / Type Ba4).